The chain runs to 287 residues: mRNA-capping enzyme small subunit (287 aa).

As to quaternary structure, heterodimer of a large and a small subunit.

It is found in the virion. The enzyme catalyses a 5'-end (5'-triphosphoguanosine)-ribonucleoside in mRNA + S-adenosyl-L-methionine = a 5'-end (N(7)-methyl 5'-triphosphoguanosine)-ribonucleoside in mRNA + S-adenosyl-L-homocysteine. Functionally, catalyzes the last reaction in the mRNA cap formation pathway. This Sus scrofa (Pig) protein is mRNA-capping enzyme small subunit.